The primary structure comprises 117 residues: Venom protein TxLP11 (117 aa).

The N-terminal stretch at 1 to 22 is a signal peptide; sequence MNTKTLIVVFLVCLLVSEVVLA.

Post-translationally, contains 4 disulfide bonds. Expressed by the venom gland.

It localises to the secreted. This is Venom protein TxLP11 from Lychas mucronatus (Chinese swimming scorpion).